A 330-amino-acid chain; its full sequence is ADP-L-glycero-D-manno-heptose-6-epimerase (330 aa).

Residues phenylalanine 11 to isoleucine 12, aspartate 32 to asparagine 33, lysine 39, lysine 54, glutamate 75 to serine 79, and asparagine 92 each bind NADP(+). Tyrosine 139 serves as the catalytic Proton acceptor. Residue lysine 143 coordinates NADP(+). Asparagine 168 contacts substrate. 2 residues coordinate NADP(+): valine 169 and lysine 177. The active-site Proton acceptor is lysine 177. Substrate contacts are provided by residues arginine 179, histidine 186, phenylalanine 200–tyrosine 203, arginine 213, and tyrosine 292.

It belongs to the NAD(P)-dependent epimerase/dehydratase family. HldD subfamily. Homopentamer. Requires NADP(+) as cofactor.

The enzyme catalyses ADP-D-glycero-beta-D-manno-heptose = ADP-L-glycero-beta-D-manno-heptose. It functions in the pathway nucleotide-sugar biosynthesis; ADP-L-glycero-beta-D-manno-heptose biosynthesis; ADP-L-glycero-beta-D-manno-heptose from D-glycero-beta-D-manno-heptose 7-phosphate: step 4/4. In terms of biological role, catalyzes the interconversion between ADP-D-glycero-beta-D-manno-heptose and ADP-L-glycero-beta-D-manno-heptose via an epimerization at carbon 6 of the heptose. In Paraburkholderia xenovorans (strain LB400), this protein is ADP-L-glycero-D-manno-heptose-6-epimerase.